Consider the following 365-residue polypeptide: Probable ethanolamine-phosphate cytidylyltransferase (365 aa).

Positions 344 to 365 are disordered; that stretch reads EERQRRKMGKNATEQTTIKTYA. The span at 355-365 shows a compositional bias: polar residues; it reads ATEQTTIKTYA.

Belongs to the cytidylyltransferase family.

It carries out the reaction phosphoethanolamine + CTP + H(+) = CDP-ethanolamine + diphosphate. Its pathway is phospholipid metabolism; phosphatidylethanolamine biosynthesis; phosphatidylethanolamine from ethanolamine: step 2/3. This chain is Probable ethanolamine-phosphate cytidylyltransferase, found in Schizosaccharomyces pombe (strain 972 / ATCC 24843) (Fission yeast).